We begin with the raw amino-acid sequence, 160 residues long: uncharacterized protein (160 aa).

The N-terminal stretch at 1 to 27 is a signal peptide; that stretch reads MVIGRKAGIIIYVMHALLLLLLSFTFA.

This is an uncharacterized protein from Aquifex aeolicus (strain VF5).